A 449-amino-acid chain; its full sequence is GTPase Der (449 aa).

EngA-type G domains are found at residues 3-167 and 178-351; these read AVIA…PTSE and PRIA…IDSR. Residues 9–16, 56–60, 119–122, 184–191, 231–235, and 296–299 each bind GTP; these read GRPNVGKS, DTGGF, NKMD, DTAGM, and NKWD. The 85-residue stretch at 352–436 folds into the KH-like domain; that stretch reads RHFSTAELNR…PLRLVFRQGE (85 aa).

This sequence belongs to the TRAFAC class TrmE-Era-EngA-EngB-Septin-like GTPase superfamily. EngA (Der) GTPase family. As to quaternary structure, associates with the 50S ribosomal subunit.

Its function is as follows. GTPase that plays an essential role in the late steps of ribosome biogenesis. The protein is GTPase Der of Acidithiobacillus ferrooxidans (strain ATCC 23270 / DSM 14882 / CIP 104768 / NCIMB 8455) (Ferrobacillus ferrooxidans (strain ATCC 23270)).